A 518-amino-acid polypeptide reads, in one-letter code: Metal transporter Nramp1 (518 aa).

12 consecutive transmembrane segments (helical) span residues 35–55 (FLSH…PGNM), 68–88 (ELLW…SLSA), 107–127 (PVWV…ASDI), 131–151 (IGTG…GVLI), 172–192 (VVVA…MSIV), 218–238 (IALL…ALVL), 255–275 (FFLF…IAII), 315–337 (SATV…GTYA), 357–377 (LMTR…GGSS), 382–402 (LIVI…IPLL), 418–438 (IYIV…NIYF), and 458–478 (VLIG…VIYL).

It belongs to the NRAMP (TC 2.A.55) family.

It is found in the membrane. Functionally, probable metal transporter that may participate in the control of iron homeostasis. The chain is Metal transporter Nramp1 (NRAMP1) from Oryza sativa subsp. japonica (Rice).